A 129-amino-acid chain; its full sequence is Aldose 1-epimerase (129 aa).

The protein belongs to the aldose epimerase family.

The enzyme catalyses alpha-D-glucose = beta-D-glucose. It participates in carbohydrate metabolism; hexose metabolism. Functionally, mutarotase converts alpha-aldose to the beta-anomer. It is active on D-glucose, L-arabinose, D-xylose, D-galactose, maltose and lactose. In Lactobacillus helveticus (Lactobacillus suntoryeus), this protein is Aldose 1-epimerase (galM).